The sequence spans 181 residues: Adenine phosphoribosyltransferase 2 (181 aa).

Ser-2 carries the post-translational modification N-acetylserine.

Belongs to the purine/pyrimidine phosphoribosyltransferase family.

The protein localises to the cytoplasm. The catalysed reaction is AMP + diphosphate = 5-phospho-alpha-D-ribose 1-diphosphate + adenine. It participates in purine metabolism; AMP biosynthesis via salvage pathway; AMP from adenine: step 1/1. Its function is as follows. Catalyzes a salvage reaction resulting in the formation of AMP, that is energically less costly than de novo synthesis. May lack catalytic activity. The sequence is that of Adenine phosphoribosyltransferase 2 (APT2) from Saccharomyces cerevisiae (strain ATCC 204508 / S288c) (Baker's yeast).